Here is a 281-residue protein sequence, read N- to C-terminus: Pantothenate synthetase (281 aa).

ATP is bound at residue 30 to 37 (MGYLHEGH). The active-site Proton donor is the His37. Gln61 serves as a coordination point for (R)-pantoate. Gln61 is a beta-alanine binding site. Residue 147 to 150 (GQKD) coordinates ATP. Gln153 contributes to the (R)-pantoate binding site. ATP-binding positions include Val176 and 184 to 187 (MSSR).

This sequence belongs to the pantothenate synthetase family. As to quaternary structure, homodimer.

The protein localises to the cytoplasm. The catalysed reaction is (R)-pantoate + beta-alanine + ATP = (R)-pantothenate + AMP + diphosphate + H(+). It functions in the pathway cofactor biosynthesis; (R)-pantothenate biosynthesis; (R)-pantothenate from (R)-pantoate and beta-alanine: step 1/1. Catalyzes the condensation of pantoate with beta-alanine in an ATP-dependent reaction via a pantoyl-adenylate intermediate. This chain is Pantothenate synthetase, found in Acetivibrio thermocellus (strain ATCC 27405 / DSM 1237 / JCM 9322 / NBRC 103400 / NCIMB 10682 / NRRL B-4536 / VPI 7372) (Clostridium thermocellum).